The chain runs to 332 residues: MHLIEKIYKNTREVVTREDAERLEGKSDIKSYIGIEPSGIPHIATAVMWPRKLAEIQDDIKVTVLLADWHAMINNKLHGDLDLIRKGGEILRKTFQAEGLTKADYVWASDLVDSSEYWRMFIDTAKRSTLKRVIRSLPIMGRNETDAEKDFSMYLYPIMQVTDIFYLDVDMAFGGMDQRHAHMLARDIAEKMKRKKVVSVHGFLLSSLKGNARMDNFVKMSKSDPNSAILVTDHMEDIERKINAAYCPPQQVEGNPVAEIMKYIIIPYYGKSIEIHGSNGVINLDSVENFDQAYQRGEIQPADLKHKVATILNEMVEPARRSLEGLDLSEFQ.

The L-tyrosine site is built by Tyr32, Tyr156, Gln160, Asp163, and Gln178. The 'KMSKS' region motif lies at 219 to 223; the sequence is KMSKS. Lys222 is a binding site for ATP.

It belongs to the class-I aminoacyl-tRNA synthetase family. TyrS type 4 subfamily. As to quaternary structure, homodimer.

The protein localises to the cytoplasm. The enzyme catalyses tRNA(Tyr) + L-tyrosine + ATP = L-tyrosyl-tRNA(Tyr) + AMP + diphosphate + H(+). Its function is as follows. Catalyzes the attachment of tyrosine to tRNA(Tyr) in a two-step reaction: tyrosine is first activated by ATP to form Tyr-AMP and then transferred to the acceptor end of tRNA(Tyr). The chain is Tyrosine--tRNA ligase from Thermoplasma acidophilum (strain ATCC 25905 / DSM 1728 / JCM 9062 / NBRC 15155 / AMRC-C165).